Reading from the N-terminus, the 269-residue chain is Fructose permease IIC component (269 aa).

A PTS EIIC type-4 domain is found at 1–234 (MSSLQIILLL…GALGLCLALL (234 aa)). Helical transmembrane passes span 2 to 22 (SSLQ…ASVL), 35 to 54 (TLVG…GGTL), 64 to 86 (VGLA…VITA), 90 to 110 (IGEG…LTIF), 149 to 169 (VMIP…AFLG), 181 to 201 (IGGG…MNIP), and 206 to 226 (FFYI…GFGA).

It localises to the cell membrane. The phosphoenolpyruvate-dependent sugar phosphotransferase system (PTS), a major carbohydrate active -transport system, catalyzes the phosphorylation of incoming sugar substrates concomitant with their translocation across the cell membrane. This system is involved in fructose transport. The polypeptide is Fructose permease IIC component (levF) (Bacillus subtilis (strain 168)).